The primary structure comprises 391 residues: Processive diacylglycerol beta-glucosyltransferase (391 aa).

This sequence belongs to the glycosyltransferase 28 family. UgtP subfamily.

The protein resides in the cell membrane. The catalysed reaction is a 1,2-diacyl-3-O-(beta-D-glucopyranosyl)-sn-glycerol + UDP-alpha-D-glucose = a 1,2-diacyl-3-O-(beta-D-Glc-(1-&gt;6)-beta-D-Glc)-sn-glycerol + UDP + H(+). It carries out the reaction a 1,2-diacyl-sn-glycerol + UDP-alpha-D-glucose = a 1,2-diacyl-3-O-(beta-D-glucopyranosyl)-sn-glycerol + UDP + H(+). It functions in the pathway glycolipid metabolism; diglucosyl-diacylglycerol biosynthesis. Its function is as follows. Processive glucosyltransferase involved in the biosynthesis of both the bilayer- and non-bilayer-forming membrane glucolipids. Is able to successively transfer two glucosyl residues to diacylglycerol (DAG), thereby catalyzing the formation of beta-monoglucosyl-DAG (3-O-(beta-D-glucopyranosyl)-1,2-diacyl-sn-glycerol) and beta-diglucosyl-DAG (3-O-(beta-D-glucopyranosyl-beta-(1-&gt;6)-D-glucopyranosyl)-1,2-diacyl-sn-glycerol). Beta-diglucosyl-DAG is the predominant glycolipid found in Bacillales and is also used as a membrane anchor for lipoteichoic acid (LTA). In Staphylococcus carnosus (strain TM300), this protein is Processive diacylglycerol beta-glucosyltransferase.